A 240-amino-acid polypeptide reads, in one-letter code: uncharacterized protein (240 aa).

The tract at residues 1-27 is disordered; sequence MKDLQKKSSVRRQITNEDDERYGEDSI. Phosphoserine occurs at positions 59 and 95. The disordered stretch occupies residues 189 to 227; that stretch reads RTPSPTGKSVGDEATSNNMHSSSAIRNPNGPTVDPEEGK. Polar residues predominate over residues 202–218; that stretch reads ATSNNMHSSSAIRNPNG.

This is an uncharacterized protein from Saccharomyces cerevisiae (strain ATCC 204508 / S288c) (Baker's yeast).